Consider the following 119-residue polypeptide: Dihydroneopterin aldolase (119 aa).

Substrate is bound by residues glutamate 21, tyrosine 53, and 72–73 (IE). The Proton donor/acceptor role is filled by lysine 99.

This sequence belongs to the DHNA family.

It catalyses the reaction 7,8-dihydroneopterin = 6-hydroxymethyl-7,8-dihydropterin + glycolaldehyde. The protein operates within cofactor biosynthesis; tetrahydrofolate biosynthesis; 2-amino-4-hydroxy-6-hydroxymethyl-7,8-dihydropteridine diphosphate from 7,8-dihydroneopterin triphosphate: step 3/4. Catalyzes the conversion of 7,8-dihydroneopterin to 6-hydroxymethyl-7,8-dihydropterin. The chain is Dihydroneopterin aldolase (folB) from Streptococcus pyogenes serotype M6 (strain ATCC BAA-946 / MGAS10394).